The primary structure comprises 79 residues: Small ribosomal subunit protein uS17 (79 aa).

It belongs to the universal ribosomal protein uS17 family. As to quaternary structure, part of the 30S ribosomal subunit.

In terms of biological role, one of the primary rRNA binding proteins, it binds specifically to the 5'-end of 16S ribosomal RNA. The polypeptide is Small ribosomal subunit protein uS17 (Roseobacter denitrificans (strain ATCC 33942 / OCh 114) (Erythrobacter sp. (strain OCh 114))).